A 304-amino-acid polypeptide reads, in one-letter code: Transcription factor BEE 2 (304 aa).

Positions 74–132 are disordered; that stretch reads FHMEPVKNNGHSRAITLQNKRKPEGKTEKREKKKIKAEDETEPSMKGKSNMSNTETSSE. Residues 82–91 are compositionally biased toward polar residues; sequence NGHSRAITLQ. Residues 94–103 show a composition bias toward basic and acidic residues; it reads RKPEGKTEKR. Positions 120-132 are enriched in polar residues; sequence GKSNMSNTETSSE. The bHLH domain occupies 147–197; sequence EATDRHSLAERARREKISKKMKCLQDIVPGCNKVTGKAGMLDEIINYVQSL.

In terms of assembly, homodimer. As to expression, expressed in stems and flowers.

The protein resides in the nucleus. In terms of biological role, positive regulator of brassinosteroid signaling. This Arabidopsis thaliana (Mouse-ear cress) protein is Transcription factor BEE 2 (BEE2).